Here is a 68-residue protein sequence, read N- to C-terminus: Small proline-rich protein 2K (68 aa).

The 1; truncated repeat unit spans residues 21–26 (PKPCSP). Positions 21-65 (PKPCSPPKCPEPCPPPKCPETCPPQPCQRKCPPVLEAPCQQKCPS) are 3.5 X 9 AA approximate tandem repeats. 3 tandem repeats follow at residues 27–35 (PKCPEPCPP), 36–44 (PKCPETCPP), and 45–53 (QPCQRKCPP).

Belongs to the cornifin (SPRR) family. Not expressed in uterus.

The protein resides in the cytoplasm. Cross-linked envelope protein of keratinocytes. It is a keratinocyte protein that first appears in the cell cytosol, but ultimately becomes cross-linked to membrane proteins by transglutaminase. All that results in the formation of an insoluble envelope beneath the plasma membrane. The sequence is that of Small proline-rich protein 2K (Sprr2k) from Mus musculus (Mouse).